The following is a 448-amino-acid chain: Probable D-serine dehydratase (448 aa).

An N6-(pyridoxal phosphate)lysine modification is found at lysine 111.

The protein belongs to the serine/threonine dehydratase family. DsdA subfamily. The cofactor is pyridoxal 5'-phosphate.

The catalysed reaction is D-serine = pyruvate + NH4(+). The chain is Probable D-serine dehydratase from Rhizobium etli (strain CIAT 652).